Here is a 50-residue protein sequence, read N- to C-terminus: uncharacterized protein (50 aa).

Residues 10–29 (LFFYYPFFIIFLYIYLVFFI) form a helical membrane-spanning segment.

Its subcellular location is the plastid. It localises to the chloroplast membrane. This is an uncharacterized protein from Marchantia polymorpha (Common liverwort).